We begin with the raw amino-acid sequence, 881 residues long: Phosphoenolpyruvate carboxylase (881 aa).

Active-site residues include His142 and Lys547.

This sequence belongs to the PEPCase type 1 family. The cofactor is Mg(2+).

It carries out the reaction oxaloacetate + phosphate = phosphoenolpyruvate + hydrogencarbonate. Functionally, forms oxaloacetate, a four-carbon dicarboxylic acid source for the tricarboxylic acid cycle. The polypeptide is Phosphoenolpyruvate carboxylase (Hahella chejuensis (strain KCTC 2396)).